The sequence spans 280 residues: Foldase protein PrsA 4 (280 aa).

The N-terminal stretch at 1–21 (MKRKKLVIGSILMGMTLSLSA) is a signal peptide. Cys-22 carries the N-palmitoyl cysteine lipid modification. Cys-22 carries S-diacylglycerol cysteine lipidation. One can recognise a PpiC domain in the interval 132–222 (KPKLQVSHIL…FGYHIIKLTD (91 aa)).

The protein belongs to the PrsA family.

The protein localises to the cell membrane. It carries out the reaction [protein]-peptidylproline (omega=180) = [protein]-peptidylproline (omega=0). Functionally, plays a major role in protein secretion by helping the post-translocational extracellular folding of several secreted proteins. This Bacillus cereus (strain ATCC 14579 / DSM 31 / CCUG 7414 / JCM 2152 / NBRC 15305 / NCIMB 9373 / NCTC 2599 / NRRL B-3711) protein is Foldase protein PrsA 4 (prsA4).